The sequence spans 157 residues: Ribosome maturation factor RimM (157 aa).

In terms of domain architecture, PRC barrel spans 89-156 (PGEYYHVDLI…DRLLIDPEFV (68 aa)).

It belongs to the RimM family. In terms of assembly, binds ribosomal protein uS19.

Its subcellular location is the cytoplasm. Its function is as follows. An accessory protein needed during the final step in the assembly of 30S ribosomal subunit, possibly for assembly of the head region. Essential for efficient processing of 16S rRNA. May be needed both before and after RbfA during the maturation of 16S rRNA. It has affinity for free ribosomal 30S subunits but not for 70S ribosomes. This is Ribosome maturation factor RimM from Rhizorhabdus wittichii (strain DSM 6014 / CCUG 31198 / JCM 15750 / NBRC 105917 / EY 4224 / RW1) (Sphingomonas wittichii).